We begin with the raw amino-acid sequence, 559 residues long: NXPE family member 3 (559 aa).

The signal sequence occupies residues 1–30 (MWTNFFKLRLFCCLLAVLMVVVLVVNVTQV). N-linked (GlcNAc...) asparagine glycosylation is found at Asn-26, Asn-237, and Asn-346.

It belongs to the NXPE family.

It localises to the secreted. The protein is NXPE family member 3 (NXPE3) of Pongo abelii (Sumatran orangutan).